The chain runs to 190 residues: dTTP/UTP pyrophosphatase (190 aa).

Asp-70 (proton acceptor) is an active-site residue.

It belongs to the Maf family. YhdE subfamily. It depends on a divalent metal cation as a cofactor.

It localises to the cytoplasm. The enzyme catalyses dTTP + H2O = dTMP + diphosphate + H(+). It catalyses the reaction UTP + H2O = UMP + diphosphate + H(+). In terms of biological role, nucleoside triphosphate pyrophosphatase that hydrolyzes dTTP and UTP. May have a dual role in cell division arrest and in preventing the incorporation of modified nucleotides into cellular nucleic acids. This Gloeobacter violaceus (strain ATCC 29082 / PCC 7421) protein is dTTP/UTP pyrophosphatase.